We begin with the raw amino-acid sequence, 487 residues long: Protein nucleotidyltransferase YdiU (487 aa).

Residues G86, G88, R89, K109, D121, G122, R172, and R179 each coordinate ATP. D248 acts as the Proton acceptor in catalysis. 2 residues coordinate Mg(2+): N249 and D258. Position 258 (D258) interacts with ATP.

Belongs to the SELO family. The cofactor is Mg(2+). Mn(2+) is required as a cofactor.

The catalysed reaction is L-seryl-[protein] + ATP = 3-O-(5'-adenylyl)-L-seryl-[protein] + diphosphate. It carries out the reaction L-threonyl-[protein] + ATP = 3-O-(5'-adenylyl)-L-threonyl-[protein] + diphosphate. The enzyme catalyses L-tyrosyl-[protein] + ATP = O-(5'-adenylyl)-L-tyrosyl-[protein] + diphosphate. It catalyses the reaction L-histidyl-[protein] + UTP = N(tele)-(5'-uridylyl)-L-histidyl-[protein] + diphosphate. The catalysed reaction is L-seryl-[protein] + UTP = O-(5'-uridylyl)-L-seryl-[protein] + diphosphate. It carries out the reaction L-tyrosyl-[protein] + UTP = O-(5'-uridylyl)-L-tyrosyl-[protein] + diphosphate. Its function is as follows. Nucleotidyltransferase involved in the post-translational modification of proteins. It can catalyze the addition of adenosine monophosphate (AMP) or uridine monophosphate (UMP) to a protein, resulting in modifications known as AMPylation and UMPylation. This is Protein nucleotidyltransferase YdiU from Sphingopyxis alaskensis (strain DSM 13593 / LMG 18877 / RB2256) (Sphingomonas alaskensis).